A 132-amino-acid polypeptide reads, in one-letter code: Small ribosomal subunit protein uS8c (132 aa).

Belongs to the universal ribosomal protein uS8 family. As to quaternary structure, part of the 30S ribosomal subunit.

The protein localises to the plastid. It is found in the chloroplast. One of the primary rRNA binding proteins, it binds directly to 16S rRNA central domain where it helps coordinate assembly of the platform of the 30S subunit. In Nymphaea alba (White water-lily), this protein is Small ribosomal subunit protein uS8c (rps8).